The sequence spans 211 residues: MAPSRNGMILNPHFHKDWQKRVRTWFNQPARKIRRRKARQAKARRIAPRPVSGPLRPVVRCPTIRYHTKVRAGRGFTLEELKAAGINKKVARTIGISVDSRRRNRSTESLQANVQRLKEYRTKLIIFPRKAAKPKKGDSTEEELKMATQLTGPVMPIKKVHKKEKARVISEDEKNFKAFASLRMARANARLFGIRAKRAKEAAEQDVEKKK.

This sequence belongs to the eukaryotic ribosomal protein eL13 family. Component of the 60S large ribosomal subunit (LSU).

The protein localises to the cytoplasm. Component of the ribosome, a large ribonucleoprotein complex responsible for the synthesis of proteins in the cell. The small ribosomal subunit (SSU) binds messenger RNAs (mRNAs) and translates the encoded message by selecting cognate aminoacyl-transfer RNA (tRNA) molecules. The large subunit (LSU) contains the ribosomal catalytic site termed the peptidyl transferase center (PTC), which catalyzes the formation of peptide bonds, thereby polymerizing the amino acids delivered by tRNAs into a polypeptide chain. The nascent polypeptides leave the ribosome through a tunnel in the LSU and interact with protein factors that function in enzymatic processing, targeting, and the membrane insertion of nascent chains at the exit of the ribosomal tunnel. As part of the LSU, it is probably required for its formation and the maturation of rRNAs. The protein is Large ribosomal subunit protein eL13 (rpl13) of Danio rerio (Zebrafish).